Consider the following 182-residue polypeptide: Putative manganese efflux pump MntP (182 aa).

6 consecutive transmembrane segments (helical) span residues 6-26, 37-57, 71-91, 101-121, 131-151, and 162-182; these read LIPL…VSLG, ILYI…IGMV, HFAG…SSIL, IGIS…SVGL, IITI…GLFI, and YGEI…LFPI.

Belongs to the MntP (TC 9.B.29) family.

The protein localises to the cell membrane. Its function is as follows. Probably functions as a manganese efflux pump. The chain is Putative manganese efflux pump MntP from Bacillus cereus (strain ATCC 10987 / NRS 248).